The sequence spans 378 residues: Plant intracellular Ras-group-related LRR protein 8 (378 aa).

A Ubiquitin-like domain is found at 10 to 86 (PTITVQVKFG…VMLMASQGLH (77 aa)). The interval 85-120 (LHQGDGPITKNSSVPAPSTRRASNVKEAQIQKSDTN) is disordered. Over residues 93–106 (TKNSSVPAPSTRRA) the composition is skewed to polar residues. LRR repeat units lie at residues 129 to 152 (WKAT…VWGC), 153 to 176 (GSSI…IAAL), 178 to 201 (SLQK…GLTC), 202 to 225 (VQTL…LGSI), 226 to 250 (THLR…LLKH), 252 to 271 (EILI…IGGC), 272 to 293 (ESLN…AFGN), 294 to 317 (LQHL…FFIK), and 319 to 344 (SQLI…GWEE).

Belongs to the SHOC2 family. As to expression, widely expressed except in panicles.

Its function is as follows. Leucine-rich repeat protein that likely mediates protein interactions, possibly in the context of signal transduction. In Oryza sativa subsp. japonica (Rice), this protein is Plant intracellular Ras-group-related LRR protein 8 (IRL8).